The primary structure comprises 473 residues: Photosystem II CP43 reaction center protein (473 aa).

Positions 1-14 are excised as a propeptide; that stretch reads MKTLYSLRRFYHVE. N-acetylthreonine is present on Thr-15. A Phosphothreonine modification is found at Thr-15. 5 helical membrane-spanning segments follow: residues 69–93, 134–155, 178–200, 255–275, and 291–312; these read LFEV…PHLA, LLGP…KDRN, KALY…RKIT, KPFA…LSYS, and WFNN…ASQA. Position 367 (Glu-367) interacts with [CaMn4O5] cluster. A helical transmembrane segment spans residues 447–471; sequence RARAAAAGFEKGIDRDLEPVLFMTP.

It belongs to the PsbB/PsbC family. PsbC subfamily. In terms of assembly, PSII is composed of 1 copy each of membrane proteins PsbA, PsbB, PsbC, PsbD, PsbE, PsbF, PsbH, PsbI, PsbJ, PsbK, PsbL, PsbM, PsbT, PsbX, PsbY, PsbZ, Psb30/Ycf12, at least 3 peripheral proteins of the oxygen-evolving complex and a large number of cofactors. It forms dimeric complexes. Requires Binds multiple chlorophylls and provides some of the ligands for the Ca-4Mn-5O cluster of the oxygen-evolving complex. It may also provide a ligand for a Cl- that is required for oxygen evolution. PSII binds additional chlorophylls, carotenoids and specific lipids. as cofactor.

The protein localises to the plastid. It is found in the chloroplast thylakoid membrane. Its function is as follows. One of the components of the core complex of photosystem II (PSII). It binds chlorophyll and helps catalyze the primary light-induced photochemical processes of PSII. PSII is a light-driven water:plastoquinone oxidoreductase, using light energy to abstract electrons from H(2)O, generating O(2) and a proton gradient subsequently used for ATP formation. This is Photosystem II CP43 reaction center protein from Carica papaya (Papaya).